We begin with the raw amino-acid sequence, 351 residues long: Probable cell division control protein 7 homolog 1 (351 aa).

The region spanning Y21–F341 is the Protein kinase domain. ATP-binding positions include I27–V35 and K50. D137 serves as the catalytic Proton acceptor.

It belongs to the protein kinase superfamily. Ser/Thr protein kinase family. CDC7 subfamily. Mg(2+) serves as cofactor.

It carries out the reaction L-seryl-[protein] + ATP = O-phospho-L-seryl-[protein] + ADP + H(+). The enzyme catalyses L-threonyl-[protein] + ATP = O-phospho-L-threonyl-[protein] + ADP + H(+). Functionally, serine/threonine-protein kinase. Needed for the initiation of DNA synthesis during mitosis as well as for synaptonemal complex formation and commitment to recombination during meiosis. The sequence is that of Probable cell division control protein 7 homolog 1 (CDC7-1) from Encephalitozoon cuniculi (strain GB-M1) (Microsporidian parasite).